The chain runs to 111 residues: BET1-like protein (111 aa).

Residues 1-86 (MADWTRAQSS…MARSGRDNRK (86 aa)) lie on the Cytoplasmic side of the membrane. Phosphoserine is present on residues Ser9 and Ser37. Residues 15–77 (DILDRENKRM…TGSVKRFSTM (63 aa)) enclose the t-SNARE coiled-coil homology domain. Residues 87 to 107 (LLCGMAVVLIVAFFILSYLLS) form a helical; Anchor for type IV membrane protein membrane-spanning segment. The Lumenal segment spans residues 108–111 (RTRT).

In terms of assembly, component of a SNARE complex consisting of STX5, YKT6, GOSR1 and BET1L. Interacts with STX5.

The protein localises to the golgi apparatus membrane. It is found in the golgi apparatus. The protein resides in the trans-Golgi network membrane. Functionally, vesicle SNARE required for targeting and fusion of retrograde transport vesicles with the Golgi complex. Required for the integrity of the Golgi complex. The chain is BET1-like protein from Mus musculus (Mouse).